A 314-amino-acid polypeptide reads, in one-letter code: tRNA dimethylallyltransferase (314 aa).

12 to 19 (GPTGTGKS) provides a ligand contact to ATP. 14–19 (TGTGKS) is a substrate binding site.

It belongs to the IPP transferase family. In terms of assembly, monomer. Requires Mg(2+) as cofactor.

The enzyme catalyses adenosine(37) in tRNA + dimethylallyl diphosphate = N(6)-dimethylallyladenosine(37) in tRNA + diphosphate. Catalyzes the transfer of a dimethylallyl group onto the adenine at position 37 in tRNAs that read codons beginning with uridine, leading to the formation of N6-(dimethylallyl)adenosine (i(6)A). In Mycolicibacterium paratuberculosis (strain ATCC BAA-968 / K-10) (Mycobacterium paratuberculosis), this protein is tRNA dimethylallyltransferase.